A 351-amino-acid chain; its full sequence is Glycerol-3-phosphate dehydrogenase 1-like protein (351 aa).

11-16 is a binding site for NAD(+); that stretch reads GSGNWG. Residue Lys-121 participates in substrate binding. Residue Ala-154 coordinates NAD(+). Residue Lys-205 is the Proton acceptor of the active site. The NAD(+) site is built by Arg-271, Lys-298, and Gln-300. 271–272 contributes to the substrate binding site; sequence RN.

This sequence belongs to the NAD-dependent glycerol-3-phosphate dehydrogenase family.

It localises to the cytoplasm. It catalyses the reaction sn-glycerol 3-phosphate + NAD(+) = dihydroxyacetone phosphate + NADH + H(+). Its function is as follows. Plays a role in regulating cardiac sodium current. The protein is Glycerol-3-phosphate dehydrogenase 1-like protein (gpd1l) of Danio rerio (Zebrafish).